We begin with the raw amino-acid sequence, 121 residues long: Large ribosomal subunit protein bL12 (121 aa).

It belongs to the bacterial ribosomal protein bL12 family. In terms of assembly, homodimer. Part of the ribosomal stalk of the 50S ribosomal subunit. Forms a multimeric L10(L12)X complex, where L10 forms an elongated spine to which 2 to 4 L12 dimers bind in a sequential fashion. Binds GTP-bound translation factors.

Forms part of the ribosomal stalk which helps the ribosome interact with GTP-bound translation factors. Is thus essential for accurate translation. In Pseudomonas fluorescens (strain SBW25), this protein is Large ribosomal subunit protein bL12.